A 253-amino-acid chain; its full sequence is MTAYPQFDVILKALNLSSVGVIITDPEQKDNPIIFVNTGFENITGYAKEEALGSNCHFLQGDDTDKEEVAKIRHAINEKSTANVLLKNYRKDGTSFMNELTIEPIYDDHEHLYFVGIQKDVTTEHDYQLELEKSLTEIEKLSTPIVPIKENICVLPLIGSLTHDRFQHMSEYVSEYMDHGKEDYLIMDLSGLAEFNEDAVMNLVKFHGFMKLTGVELIITGISPKFAMTLIRYEENLASLTTYSTIKEALQFY.

Residues 6–79 (QFDVILKALN…AKIRHAINEK (74 aa)) form the PAS domain. S-4a-FMN cysteine is present on cysteine 56. Residues 80 to 133 (STANVLLKNYRKDGTSFMNELTIEPIYDDHEHLYFVGIQKDVTTEHDYQLELEK) enclose the PAC domain. In terms of domain architecture, STAS spans 142–253 (STPIVPIKEN…STIKEALQFY (112 aa)).

Post-translationally, FMN binds covalently to cysteine after exposure to blue light and this bond is spontaneously broken in the dark.

Its function is as follows. Exhibits the same spectroscopical features and blue-light induced photochemistry as plants phototropins, with the reversible formation of a blue-shifted photoproduct, assigned to an FMN-cysteine thiol adduct. Positive regulator in the activation of the general stress transcription factor sigma-B. This Listeria monocytogenes serovar 1/2a (strain ATCC BAA-679 / EGD-e) protein is Blue-light photoreceptor.